A 700-amino-acid polypeptide reads, in one-letter code: Long-chain-fatty-acid--CoA ligase 1 (700 aa).

Residues 1 to 21 (MVAQYTVPVGKAANEHETAPR) are disordered. A Glycyl lysine isopeptide (Lys-Gly) (interchain with G-Cter in ubiquitin) cross-link involves residue K189. Residue 269-280 (YTSGSTGEPKGV) participates in ATP binding. The FACS signature appears at 531 to 580 (DGWFKTGDIGEWEANGHLKIIDRKKNLVKTMNGEYIALEKLESVYRSNEY).

Belongs to the ATP-dependent AMP-binding enzyme family. In terms of assembly, interacts with FAT1. The cofactor is Mg(2+).

The protein resides in the lipid droplet. It is found in the cell membrane. It carries out the reaction a long-chain fatty acid + ATP + CoA = a long-chain fatty acyl-CoA + AMP + diphosphate. The catalysed reaction is (9Z)-octadecenoate + ATP + CoA = (9Z)-octadecenoyl-CoA + AMP + diphosphate. The enzyme catalyses hexadecanoate + ATP + CoA = hexadecanoyl-CoA + AMP + diphosphate. It catalyses the reaction (9Z)-hexadecenoate + ATP + CoA = (9Z)-hexadecenoyl-CoA + AMP + diphosphate. It carries out the reaction tetradecanoate + ATP + CoA = tetradecanoyl-CoA + AMP + diphosphate. The catalysed reaction is (9Z)-tetradecenoate + ATP + CoA = (9Z)-tetradecenoyl-CoA + AMP + diphosphate. The enzyme catalyses (9Z,12Z)-octadecadienoate + ATP + CoA = (9Z,12Z)-octadecadienoyl-CoA + AMP + diphosphate. It catalyses the reaction dodecanoate + ATP + CoA = dodecanoyl-CoA + AMP + diphosphate. It carries out the reaction pentadecanoate + ATP + CoA = pentadecanoyl-CoA + AMP + diphosphate. The catalysed reaction is undecanoate + ATP + CoA = undecanoyl-CoA + AMP + diphosphate. The enzyme catalyses heptadecanoate + ATP + CoA = heptadecanoyl-CoA + AMP + diphosphate. It catalyses the reaction octadecanoate + ATP + CoA = octadecanoyl-CoA + AMP + diphosphate. In terms of biological role, activates long-chain fatty acids (LCFA) by esterification of the fatty acids into metabolically active CoA-thioesters for subsequent degradation or incorporation into phospholipids. Also facilitates the transport of LCFAs into the cell, either by active transport or by decreasing the intracellular LCFA concentration. It may supplement intracellular myristoyl-CoA pools from exogenous myristate. Preferentially acts on C12:0-C16:0 fatty acids with myristic and pentadecanic acid (C15:0) having the highest activities. Also involved in long-chain base (LCB) uptake of sphingolipids. In contrast ot LCFA uptake, LCB uptake does not require ATP, suggesting that the enzyme is directly involved in active LCB uptake. Involved in the sphingolipid-to-glycerolipid metabolic pathway, converting the sphingolipid metabolite hexadecenoic acid to hexadecenoyl-CoA, which is then further converted to glycerolipids. In Saccharomyces cerevisiae (strain ATCC 204508 / S288c) (Baker's yeast), this protein is Long-chain-fatty-acid--CoA ligase 1 (FAA1).